A 180-amino-acid polypeptide reads, in one-letter code: Segregation and condensation protein B (180 aa).

The protein belongs to the ScpB family. As to quaternary structure, homodimer. Homodimerization may be required to stabilize the binding of ScpA to the Smc head domains. Component of a cohesin-like complex composed of ScpA, ScpB and the Smc homodimer, in which ScpA and ScpB bind to the head domain of Smc. The presence of the three proteins is required for the association of the complex with DNA.

It is found in the cytoplasm. Its function is as follows. Participates in chromosomal partition during cell division. May act via the formation of a condensin-like complex containing Smc and ScpA that pull DNA away from mid-cell into both cell halves. The polypeptide is Segregation and condensation protein B (Staphylococcus epidermidis (strain ATCC 35984 / DSM 28319 / BCRC 17069 / CCUG 31568 / BM 3577 / RP62A)).